An 84-amino-acid polypeptide reads, in one-letter code: Small ribosomal subunit protein uS17 (84 aa).

The protein belongs to the universal ribosomal protein uS17 family. Part of the 30S ribosomal subunit.

Its function is as follows. One of the primary rRNA binding proteins, it binds specifically to the 5'-end of 16S ribosomal RNA. The protein is Small ribosomal subunit protein uS17 of Aliivibrio salmonicida (strain LFI1238) (Vibrio salmonicida (strain LFI1238)).